The chain runs to 1049 residues: Self-sufficient cytochrome P450 monooxygenase CYP505E4 (1049 aa).

Position 405 (Cys405) interacts with heme. Residues 461–470 (SATALSQHNM) are compositionally biased toward polar residues. The segment at 461–491 (SATALSQHNMSAGATASPGSSTHLAGDENGQ) is disordered. A compositionally biased stretch (low complexity) spans 471–482 (SAGATASPGSST). Residues 499–640 (ISFFYGSNSG…DLEVWEETNL (142 aa)) enclose the Flavodoxin-like domain. FMN-binding positions include 505–509 (SNSGT) and 584–616 (VFGC…TRLT). The FAD-binding FR-type domain maps to 678–906 (RDLVEGKVTA…RPAKDAFHLP (229 aa)).

It in the N-terminal section; belongs to the cytochrome P450 family. It depends on FAD as a cofactor. FMN is required as a cofactor. The cofactor is heme.

The enzyme catalyses 2 oxidized [cytochrome P450] + NADPH = 2 reduced [cytochrome P450] + NADP(+) + H(+). The catalysed reaction is an organic molecule + reduced [NADPH--hemoprotein reductase] + O2 = an alcohol + oxidized [NADPH--hemoprotein reductase] + H2O + H(+). It catalyses the reaction dodecanoate + reduced [NADPH--hemoprotein reductase] + O2 = 5-hydroxydodecanoate + oxidized [NADPH--hemoprotein reductase] + H2O + H(+). It carries out the reaction dodecan-1-ol + reduced [NADPH--hemoprotein reductase] + O2 = 1,5-dodecanediol + oxidized [NADPH--hemoprotein reductase] + H2O + H(+). The enzyme catalyses dodecanoate + reduced [NADPH--hemoprotein reductase] + O2 = 9-hydroxydodecanoate + oxidized [NADPH--hemoprotein reductase] + H2O + H(+). The catalysed reaction is dodecan-1-ol + reduced [NADPH--hemoprotein reductase] + O2 = 1,4-dodecanediol + oxidized [NADPH--hemoprotein reductase] + H2O + H(+). It catalyses the reaction dodecan-1-ol + reduced [NADPH--hemoprotein reductase] + O2 = 1,6-dodecanediol + oxidized [NADPH--hemoprotein reductase] + H2O + H(+). Self-sufficient cytochrome P450 monooxygenase that catalyzes the regioselective in-chain hydroxylation of alkanes, fatty alcohols, and fatty acids at the omega-7 position. Performs hydroxylation of C10-C16 n-alkanes and C12 and C14 fatty alcohols; and thereby enables the one step biocatalytic synthesis of rare alcohols such as 5-dodecanol and 7-tetradecanol. Converts 1-dodecanol into 1,5-dodecanediol as major product with very little sub-terminally hydroxylated products with the 1,4-dodecanediol and 1,6-dodecanediol more abundant. Converts dodecanoic acid to 5-hydroxydodecanoic acid which can be further converted into delta-dodecalactone by lactonization of the 5-hydroxy acid at low pH. Also gives sub-terminal hydroxylation of dodecanoic acid with 9-hydroxydodecanoic acid being the second most abundant product. Does not show any significant activity toward tetradecanoic acid. The protein is Self-sufficient cytochrome P450 monooxygenase CYP505E4 of Penicillium camemberti (strain FM 013).